We begin with the raw amino-acid sequence, 302 residues long: Glutaminase (302 aa).

The substrate site is built by S61, N111, E155, N162, Y186, Y238, and V256.

It belongs to the glutaminase family. As to quaternary structure, homotetramer.

It catalyses the reaction L-glutamine + H2O = L-glutamate + NH4(+). In Pseudomonas fluorescens (strain ATCC BAA-477 / NRRL B-23932 / Pf-5), this protein is Glutaminase.